The sequence spans 689 residues: uncharacterized protein (689 aa).

A substrate-binding site is contributed by Ser566. Tyr579 acts as the Proton acceptor in catalysis.

This sequence belongs to the short-chain dehydrogenases/reductases (SDR) family.

This is an uncharacterized protein from Bacillus subtilis (strain 168).